The sequence spans 173 residues: Crossover junction endodeoxyribonuclease RuvC (173 aa).

Residues Asp-8, Glu-67, and Asp-139 contribute to the active site. Mg(2+) is bound by residues Asp-8, Glu-67, and Asp-139.

This sequence belongs to the RuvC family. As to quaternary structure, homodimer which binds Holliday junction (HJ) DNA. The HJ becomes 2-fold symmetrical on binding to RuvC with unstacked arms; it has a different conformation from HJ DNA in complex with RuvA. In the full resolvosome a probable DNA-RuvA(4)-RuvB(12)-RuvC(2) complex forms which resolves the HJ. The cofactor is Mg(2+).

Its subcellular location is the cytoplasm. It carries out the reaction Endonucleolytic cleavage at a junction such as a reciprocal single-stranded crossover between two homologous DNA duplexes (Holliday junction).. In terms of biological role, the RuvA-RuvB-RuvC complex processes Holliday junction (HJ) DNA during genetic recombination and DNA repair. Endonuclease that resolves HJ intermediates. Cleaves cruciform DNA by making single-stranded nicks across the HJ at symmetrical positions within the homologous arms, yielding a 5'-phosphate and a 3'-hydroxyl group; requires a central core of homology in the junction. The consensus cleavage sequence is 5'-(A/T)TT(C/G)-3'. Cleavage occurs on the 3'-side of the TT dinucleotide at the point of strand exchange. HJ branch migration catalyzed by RuvA-RuvB allows RuvC to scan DNA until it finds its consensus sequence, where it cleaves and resolves the cruciform DNA. The chain is Crossover junction endodeoxyribonuclease RuvC from Vibrio vulnificus (strain CMCP6).